The chain runs to 217 residues: Adenylate kinase (217 aa).

10–15 is an ATP binding site; it reads GAGKGT. Residues 30–59 are NMP; it reads STGDMFRAAMKEGTPLGLQAKEYIDRGDLV. AMP-binding positions include Thr-31, Arg-36, 57–59, 85–88, and Gln-92; these read DLV and GFPR. The tract at residues 126-163 is LID; sequence GRRICRNCGATYHLVFHPPAQPGVCDKCGGELYQRPDD. Arg-127 provides a ligand contact to ATP. 2 residues coordinate Zn(2+): Cys-130 and Cys-133. 136–137 contacts ATP; it reads TY. Zn(2+) is bound by residues Cys-150 and Cys-153. Residues Arg-160 and Arg-171 each coordinate AMP. Residue Gln-199 coordinates ATP.

Belongs to the adenylate kinase family. As to quaternary structure, monomer.

Its subcellular location is the cytoplasm. The catalysed reaction is AMP + ATP = 2 ADP. Its pathway is purine metabolism; AMP biosynthesis via salvage pathway; AMP from ADP: step 1/1. Catalyzes the reversible transfer of the terminal phosphate group between ATP and AMP. Plays an important role in cellular energy homeostasis and in adenine nucleotide metabolism. The protein is Adenylate kinase of Geobacillus thermodenitrificans (strain NG80-2).